Reading from the N-terminus, the 553-residue chain is Arginine--tRNA ligase (553 aa).

Positions 130–140 (ANPTGDLHIGH) match the 'HIGH' region motif.

It belongs to the class-I aminoacyl-tRNA synthetase family. Monomer.

The protein resides in the cytoplasm. The catalysed reaction is tRNA(Arg) + L-arginine + ATP = L-arginyl-tRNA(Arg) + AMP + diphosphate. This chain is Arginine--tRNA ligase, found in Staphylococcus epidermidis (strain ATCC 12228 / FDA PCI 1200).